Here is a 436-residue protein sequence, read N- to C-terminus: Phosphomethylpyrimidine synthase (436 aa).

Residues asparagine 69, methionine 98, tyrosine 127, histidine 163, 185-187 (SRG), 226-229 (DACR), and glutamate 265 each bind substrate. Histidine 269 is a binding site for Zn(2+). Residue tyrosine 292 coordinates substrate. Histidine 333 serves as a coordination point for Zn(2+). 3 residues coordinate [4Fe-4S] cluster: cysteine 409, cysteine 412, and cysteine 416.

It belongs to the ThiC family. The cofactor is [4Fe-4S] cluster.

The enzyme catalyses 5-amino-1-(5-phospho-beta-D-ribosyl)imidazole + S-adenosyl-L-methionine = 4-amino-2-methyl-5-(phosphooxymethyl)pyrimidine + CO + 5'-deoxyadenosine + formate + L-methionine + 3 H(+). Its pathway is cofactor biosynthesis; thiamine diphosphate biosynthesis. Functionally, catalyzes the synthesis of the hydroxymethylpyrimidine phosphate (HMP-P) moiety of thiamine from aminoimidazole ribotide (AIR) in a radical S-adenosyl-L-methionine (SAM)-dependent reaction. The chain is Phosphomethylpyrimidine synthase from Clostridium perfringens (strain ATCC 13124 / DSM 756 / JCM 1290 / NCIMB 6125 / NCTC 8237 / Type A).